The primary structure comprises 143 residues: Large ribosomal subunit protein uL11 (143 aa).

Belongs to the universal ribosomal protein uL11 family. In terms of assembly, part of the ribosomal stalk of the 50S ribosomal subunit. Interacts with L10 and the large rRNA to form the base of the stalk. L10 forms an elongated spine to which L12 dimers bind in a sequential fashion forming a multimeric L10(L12)X complex. One or more lysine residues are methylated.

Its function is as follows. Forms part of the ribosomal stalk which helps the ribosome interact with GTP-bound translation factors. This Chromohalobacter salexigens (strain ATCC BAA-138 / DSM 3043 / CIP 106854 / NCIMB 13768 / 1H11) protein is Large ribosomal subunit protein uL11.